The chain runs to 84 residues: MTSSPSTVSTTLLSILRDDLNIDLTRVTPDARLVDDVGLDSVAFAVGMVAIEERLGVALSEEELLTCDTVGELEAAIAAKYRDE.

Residues 6 to 81 form the Carrier domain; the sequence is STVSTTLLSI…ELEAAIAAKY (76 aa). Ser41 carries the O-(pantetheine 4'-phosphoryl)serine modification.

4'-phosphopantetheine is transferred from CoA to a specific serine of apo-ACP, leading to the activated holo-ACP form.

It localises to the cytoplasm. Its pathway is siderophore biosynthesis; mycobactin biosynthesis. In terms of biological role, acyl carrier protein involved in the formation of acyl-S-ACP intermediates within the mycobactin biosynthesis process. The aliphatic chains carried by ACP are subsequently transferred on to the mycobactin core by MbtK. This is Acyl carrier protein MbtL (mbtL) from Mycobacterium bovis (strain ATCC BAA-935 / AF2122/97).